Reading from the N-terminus, the 129-residue chain is Fluoride-specific ion channel FluC 1 (129 aa).

Transmembrane regions (helical) follow at residues 43-63, 68-88, and 100-120; these read ASLL…PAWV, VVSL…TFSY, and LLAA…AALG. Na(+) is bound by residues glycine 78 and serine 81.

The protein belongs to the fluoride channel Fluc/FEX (TC 1.A.43) family.

The protein resides in the cell membrane. It carries out the reaction fluoride(in) = fluoride(out). Na(+) is not transported, but it plays an essential structural role and its presence is essential for fluoride channel function. Fluoride-specific ion channel. Important for reducing fluoride concentration in the cell, thus reducing its toxicity. The protein is Fluoride-specific ion channel FluC 1 of Frankia casuarinae (strain DSM 45818 / CECT 9043 / HFP020203 / CcI3).